Consider the following 481-residue polypeptide: Glycogen synthase (481 aa).

Position 16 (lysine 16) interacts with ADP-alpha-D-glucose.

Belongs to the glycosyltransferase 1 family. Bacterial/plant glycogen synthase subfamily.

The catalysed reaction is [(1-&gt;4)-alpha-D-glucosyl](n) + ADP-alpha-D-glucose = [(1-&gt;4)-alpha-D-glucosyl](n+1) + ADP + H(+). Its pathway is glycan biosynthesis; glycogen biosynthesis. Its function is as follows. Synthesizes alpha-1,4-glucan chains using ADP-glucose. This Cellvibrio japonicus (strain Ueda107) (Pseudomonas fluorescens subsp. cellulosa) protein is Glycogen synthase.